A 2570-amino-acid polypeptide reads, in one-letter code: MAGPRGLLPLCLLAFCLAGFSFVRGQVLFKGCDVKTTFVTHVPCTSCAAIKKQTCPSGWLRELPDQITQDCRYEVQLGGSMVSMSGCRRKCRKQVVQKACCPGYWGSRCHECPGGAETPCNGHGTCLDGMDRNGTCVCQENFRGSACQECQDPNRFGPDCQSVCSCVHGVCNHGPRGDGSCLCFAGYTGPHCDQELPVCQELRCPQNTQCSAEAPSCRCLPGYTQQGSECRAPNPCWPSPCSLLAQCSVSPKGQAQCHCPENYHGDGMVCLPKDPCTDNLGGCPSNSTLCVYQKPGQAFCTCRPGLVSINSNASAGCFAFCSPFSCDRSATCQVTADGKTSCVCRESEVGDGRACYGHLLHEVQKATQTGRVFLQLRVAVAMMDQGCREILTTAGPFTVLVPSVSSFSSRTMNASLAQQLCRQHIIAGQHILEDTRTQQTRRWWTLAGQEITVTFNQFTKYSYKYKDQPQQTFNIYKANNIAANGVFHVVTGLRWQAPSGTPGDPKRTIGQILASTEAFSRFETILENCGLPSILDGPGPFTVFAPSNEAVDSLRDGRLIYLFTAGLSKLQELVRYHIYNHGQLTVEKLISKGRILTMANQVLAVNISEEGRILLGPEGVPLQRVDVMAANGVIHMLDGILLPPTILPILPKHCSEEQHKIVAGSCVDCQALNTSTCPPNSVKLDIFPKECVYIHDPTGLNVLKKGCASYCNQTIMEQGCCKGFFGPDCTQCPGGFSNPCYGKGNCSDGIQGNGACLCFPDYKGIACHICSNPNKHGEQCQEDCGCVHGLCDNRPGSGGVCQQGTCAPGFSGRFCNESMGDCGPTGLAQHCHLHARCVSQEGVARCRCLDGFEGDGFSCTPSNPCSHPDRGGCSENAECVPGSLGTHHCTCHKGWSGDGRVCVAIDECELDMRGGCHTDALCSYVGPGQSRCTCKLGFAGDGYQCSPIDPCRAGNGGCHGLATCRAVGGGQRVCTCPPGFGGDGFSCYGDIFRELEANAHFSIFYQWLKSAGITLPADRRVTALVPSEAAVRQLSPEDRAFWLQPRTLPNLVRAHFLQGALFEEELARLGGQEVATLNPTTRWEIRNISGRVWVQNASVDVADLLATNGVLHILSQVLLPPRGDVPGGQGLLQQLDLVPAFSLFRELLQHHGLVPQIEAATAYTIFVPTNRSLEAQGNSSHLDADTVRHHVVLGEALSMETLRKGGHRNSLLGPAHWIVFYNHSGQPEVNHVPLEGPMLEAPGRSLIGLSGVLTVGSSRCLHSHAEALREKCVNCTRRFRCTQGFQLQDTPRKSCVYRSGFSFSRGCSYTCAKKIQVPDCCPGFFGTLCEPCPGGLGGVCSGHGQCQDRFLGSGECHCHEGFHGTACEVCELGRYGPNCTGVCDCAHGLCQEGLQGDGSCVCNVGWQGLRCDQKITSPQCPRKCDPNANCVQDSAGASTCACAAGYSGNGIFCSEVDPCAHGHGGCSPHANCTKVAPGQRTCTCQDGYMGDGELCQEINSCLIHHGGCHIHAECIPTGPQQVSCSCREGYSGDGIRTCELLDPCSKNNGGCSPYATCKSTGDGQRTCTCDTAHTVGDGLTCRARVGLELLRDKHASFFSLRLLEYKELKGDGPFTIFVPHADLMSNLSQDELARIRAHRQLVFRYHVVGCRRLRSEDLLEQGYATALSGHPLRFSEREGSIYLNDFARVVSSDHEAVNGILHFIDRVLLPPEALHWEPDDAPIPRRNVTAAAQGFGYKIFSGLLKVAGLLPLLREASHRPFTMLWPTDAAFRALPPDRQAWLYHEDHRDKLAAILRGHMIRNVEALASDLPNLGPLRTMHGTPISFSCSRTRAGELMVGEDDARIVQRHLPFEGGLAYGIDQLLEPPGLGARCDHFETRPLRLNTCSICGLEPPCPEGSQEQGSPEACWRFYPKFWTSPPLHSLGLRSVWVHPSLWGRPQGLGRGCHRNCVTTTWKPSCCPGHYGSECQACPGGPSSPCSDRGVCMDGMSGSGQCLCRSGFAGTACELCAPGAFGPHCQACRCTVHGRCDEGLGGSGSCFCDEGWTGPRCEVQLELQPVCTPPCAPEAVCRAGNSCECSLGYEGDGRVCTVADLCQDGHGGCSEHANCSQVGTMVTCTCLPDYEGDGWSCRARNPCTDGHRGGCSEHANCLSTGLNTRRCECHAGYVGDGLQCLEESEPPVDRCLGQPPPCHSDAMCTDLHFQEKRAGVFHLQATSGPYGLNFSEAEAACEAQGAVLASFPQLSAAQQLGFHLCLMGWLANGSTAHPVVFPVADCGNGRVGIVSLGARKNLSERWDAYCFRVQDVACRCRNGFVGDGISTCNGKLLDVLAATANFSTFYGMLLGYANATQRGLDFLDFLDDELTYKTLFVPVNEGFVDNMTLSGPDLELHASNATLLSANASQGKLLPAHSGLSLIISDAGPDNSSWAPVAPGTVVVSRIIVWDIMAFNGIIHALASPLLAPPQPQAVLAPEAPPVAAGVGAVLAAGALLGLVAGALYLRARGKPMGFGFSAFQAEDDADDDFSPWQEGTNPTLVSVPNPVFGSDTFCEPFDDSLLEEDFPDTQRILTVK.

The signal sequence occupies residues 1–25; sequence MAGPRGLLPLCLLAFCLAGFSFVRG. Residues 26–2478 are Extracellular-facing; sequence QVLFKGCDVK…LAPEAPPVAA (2453 aa). 4 consecutive EGF-like domains span residues 110–148, 156–193, 195–229, and 232–271; these read HECPGGAETPCNGHGTCLDGMDRNGTCVCQENFRGSACQ, FGPDCQSVCSCVHGVCNHGPRGDGSCLCFAGYTGPHCD, ELPVCQELRCPQNTQCSAEAPSCRCLPGYTQQGSE, and APNPCWPSPCSLLAQCSVSPKGQAQCHCPENYHGDGMVCL. 11 disulfide bridges follow: C112–C126, C120–C136, C138–C147, C160–C171, C164–C181, C183–C192, C199–C210, C204–C217, C236–C247, C241–C257, and C259–C270. Residue N133 is glycosylated (N-linked (GlcNAc...) asparagine). Residues N286, N312, N413, N606, N673, N712, and N745 are each glycosylated (N-linked (GlcNAc...) asparagine). 2 consecutive FAS1 domains span residues 356–494 and 506–641; these read YGHL…TGLR and KRTI…DGIL. In terms of domain architecture, EGF-like 5 spans 728–768; that stretch reads DCTQCPGGFSNPCYGKGNCSDGIQGNGACLCFPDYKGIACH. Disulfide bonds link C732/C746, C740/C756, and C758/C767. N816 carries N-linked (GlcNAc...) asparagine glycosylation. EGF-like domains follow at residues 818-858, 861-903, 904-946, and 947-986; these read SMGD…DGFS, PSNP…RVCV, AIDE…YQCS, and PIDPCRAGNGGCHGLATCRAVGGGQRVCTCPPGFGGDGFS. 10 disulfides stabilise this stretch: C822-C837, C831-C846, C865-C879, C873-C889, C891-C902, C908-C922, C916-C932, C934-C945, C951-C964, and C958-C974. FAS1 domains follow at residues 988-1118 and 1128-1253; these read YGDI…SQVL and GQGL…SGVL. N-linked (GlcNAc...) asparagine glycans are attached at residues N1087, N1096, N1170, N1178, N1222, and N1274. A Laminin EGF-like 1 domain is found at 1327–1392; the sequence is TLCEPCPGGL…CDCAHGLCQE (66 aa). Intrachain disulfides connect C1332-C1346, C1340-C1356, and C1358-C1367. An N-linked (GlcNAc...) asparagine glycan is attached at N1378. Disulfide bonds link C1379–C1390, C1383–C1400, C1402–C1411, C1420–C1430, C1424–C1440, C1442–C1453, C1459–C1472, C1466–C1482, C1484–C1495, C1501–C1514, C1508–C1524, C1526–C1538, C1544–C1557, C1551–C1567, and C1569–C1581. EGF-like domains lie at 1416 to 1454, 1455 to 1496, 1497 to 1539, and 1540 to 1582; these read TSPQCPRKCDPNANCVQDSAGASTCACAAGYSGNGIFCS, EVDP…ELCQ, EINS…RTCE, and LLDP…LTCR. N-linked (GlcNAc...) asparagine glycosylation occurs at N1471. 2 FAS1 domains span residues 1582–1708 and 1724–1864; these read RARV…DRVL and PRRN…DQLL. N1626 and N1727 each carry an N-linked (GlcNAc...) asparagine glycan. A Laminin EGF-like 2 domain is found at 1966-2031; sequence SECQACPGGP…RCTVHGRCDE (66 aa). Cystine bridges form between C1971–C1985, C1979–C1995, C1997–C2006, C2018–C2029, C2023–C2039, C2041–C2050, C2060–C2070, C2064–C2076, C2078–C2089, C2095–C2108, C2102–C2117, C2119–C2130, C2136–C2150, C2144–C2160, and C2162–C2173. EGF-like domains follow at residues 2056 to 2090, 2091 to 2131, and 2132 to 2174; these read LQPVCTPPCAPEAVCRAGNSCECSLGYEGDGRVCT, VADL…WSCR, and ARNP…LQCL. N-linked (GlcNAc...) asparagine glycosylation is present at N2107. Residues 2206-2301 form the Link domain; that stretch reads RAGVFHLQAT…SERWDAYCFR (96 aa). Residues N2222, N2261, N2290, N2334, N2347, N2379, N2393, N2400, and N2424 are each glycosylated (N-linked (GlcNAc...) asparagine). Cystine bridges form between C2230–C2299 and C2254–C2275. Residues 2322 to 2459 form the FAS1 7 domain; that stretch reads NGKLLDVLAA…GIIHALASPL (138 aa). Residues 2479–2499 traverse the membrane as a helical segment; sequence GVGAVLAAGALLGLVAGALYL. Residues 2500 to 2570 are Cytoplasmic-facing; sequence RARGKPMGFG…PDTQRILTVK (71 aa).

As to quaternary structure, interacts with CHID1. As to expression, high levels found in spleen, lymph node, liver and placenta. Also expressed in endothelial cells.

It is found in the membrane. Acts as a scavenger receptor for acetylated low density lipoprotein. Binds to both Gram-positive and Gram-negative bacteria and may play a role in defense against bacterial infection. When inhibited in endothelial tube formation assays, there is a marked decrease in cell-cell interactions, suggesting a role in angiogenesis. Involved in the delivery of newly synthesized CHID1/SI-CLP from the biosynthetic compartment to the endosomal/lysosomal system. This chain is Stabilin-1 (STAB1), found in Homo sapiens (Human).